The chain runs to 336 residues: Potassium channel subfamily K member 1 (336 aa).

Over 1–20 (MLQSLAGSSCVRLVERHRSA) the chain is Cytoplasmic. The chain crosses the membrane as a helical span at residues 21–41 (WCFGLLVLGYLLYLVFGAVVF). Over 42–103 (SSVELPYEDL…SNASGNWNWD (62 aa)) the chain is Extracellular. Asparagine 95 carries an N-linked (GlcNAc...) asparagine glycan. The helical intramembrane region spans 104–116 (FTSALFFASTVLS). An intramembrane segment occupies 117–122 (TTGYGH). The tract at residues 117–122 (TTGYGH) is selectivity filter 1. The Extracellular portion of the chain corresponds to 123–132 (TVPLSDGGKA). Residues 133 to 156 (FCIIYSVIGIPFTLLFLTAVVQRI) traverse the membrane as a helical segment. Residues 157–181 (TVHVTRRPVLYFHIRWGFSKQMVGI) are Cytoplasmic-facing. The helical transmembrane segment at 182–202 (VHAVVLGFVTVSCFFFIPAAV) threads the bilayer. At 203–211 (FSVLEDDWN) the chain is on the extracellular side. The helical intramembrane region spans 212-224 (FLESFYFCFISLS). The segment at 225–230 (TIGLGD) is selectivity filter 2. An intramembrane segment occupies 225 to 231 (TIGLGDY). At 232-243 (VPGEGYNQKFRE) the chain is on the extracellular side. A helical transmembrane segment spans residues 244–267 (LYKIGITCYLLLGLIAMLVVLETF). At 268–336 (CELHELKKFR…SAYAEDSASH (69 aa)) the chain is on the cytoplasmic side. Lysine 274 is covalently cross-linked (Glycyl lysine isopeptide (Lys-Gly) (interchain with G-Cter in SUMO)). The segment at 293 to 299 (IVEHDQL) is important for intracellular retention in recycling endosomes.

This sequence belongs to the two pore domain potassium channel (TC 1.A.1.8) family. In terms of assembly, homodimer; disulfide-linked. Heterodimer with KCNK2; disulfide-linked. In astrocytes, forms mostly heterodimeric potassium channels with KCNK2, with only a minor proportion of functional channels containing homodimeric KCNK1. Interacts with KCNK3 and KCNK9, forming functional heterodimeric channels. Interacts with GNG4. Identified in a complex with PSD and ARF6; interacts only with PSD that is bound to ARF6. Interacts with UBE2I. In terms of processing, sumoylation is controversial. Sumoylated by UBE2I. Not sumoylated when expressed in xenopus oocytes or mammalian cells. Sumoylation inactivates the channel, but does not interfere with expression at the cell membrane. Sumoylation of a single subunit is sufficient to silence the dimeric channel. Sumoylation of KCNK1 is sufficient to silence heterodimeric channels formed by KCNK1 and KCNK3 or KCNK9. Desumoylated by SENP1; this activates the channel. Desumoylated by SENP1; this strongly increases halothane-mediated activation of heterodimeric channels formed with KCNK9. SENP1 treatment has no effect.

Its subcellular location is the cell membrane. The protein resides in the recycling endosome. It localises to the synaptic cell membrane. It is found in the cytoplasmic vesicle. The protein localises to the perikaryon. Its subcellular location is the cell projection. The protein resides in the dendrite. It localises to the apical cell membrane. The enzyme catalyses K(+)(in) = K(+)(out). It carries out the reaction NH4(+)(in) = NH4(+)(out). It catalyses the reaction Na(+)(in) = Na(+)(out). The catalysed reaction is Rb(+)(in) = Rb(+)(out). The enzyme catalyses Cs(+)(in) = Cs(+)(out). It carries out the reaction Li(+)(in) = Li(+)(out). It catalyses the reaction L-glutamate(out) = L-glutamate(in). The catalysed reaction is chloride(in) = chloride(out). Functionally, ion channel that contributes to passive transmembrane potassium transport and to the regulation of the resting membrane potential in brain astrocytes, but also in kidney and in other tissues. Forms dimeric channels through which potassium ions pass in accordance with their electrochemical gradient. The channel is selective for K(+) ions at physiological potassium concentrations and at neutral pH, but becomes permeable to Na(+) at subphysiological K(+) levels and upon acidification of the extracellular medium. The homodimer has very low potassium channel activity, when expressed in heterologous systems, and can function as weakly inward rectifying potassium channel. Channel activity is modulated by activation of serotonin receptors. Heterodimeric channels containing KCNK1 and KCNK2 have much higher activity, and may represent the predominant form in astrocytes. Heterodimeric channels containing KCNK1 and KCNK3 or KCNK9 have much higher activity. Heterodimeric channels formed by KCNK1 and KCNK9 may contribute to halothane-sensitive currents. Mediates outward rectifying potassium currents in dentate gyrus granule cells and contributes to the regulation of their resting membrane potential. Contributes to the regulation of action potential firing in dentate gyrus granule cells and down-regulates their intrinsic excitability. In astrocytes, the heterodimer formed by KCNK1 and KCNK2 is required for rapid glutamate release in response to activation of G-protein coupled receptors, such as F2R and CNR1. Required for normal ion and water transport in the kidney. Contributes to the regulation of the resting membrane potential of pancreatic beta cells. The low channel activity of homodimeric KCNK1 may be due to sumoylation. The low channel activity may be due to rapid internalization from the cell membrane and retention in recycling endosomes. Permeable to monovalent cations with ion selectivity for K(+) &gt; Rb(+) &gt;&gt; NH4(+) &gt;&gt; Cs(+) = Na(+) = Li(+). The sequence is that of Potassium channel subfamily K member 1 from Cavia porcellus (Guinea pig).